Reading from the N-terminus, the 441-residue chain is Probable cytosolic Fe-S cluster assembly factor v1g210509 (441 aa).

[4Fe-4S] cluster-binding residues include Cys-24, Cys-72, Cys-75, Cys-78, Cys-196, Cys-252, and Cys-401.

It belongs to the NARF family.

Its function is as follows. Component of the cytosolic iron-sulfur (Fe/S) protein assembly machinery. Required for maturation of extramitochondrial Fe/S proteins. In Nematostella vectensis (Starlet sea anemone), this protein is Probable cytosolic Fe-S cluster assembly factor v1g210509.